The chain runs to 577 residues: Myb-like protein N (577 aa).

Disordered regions lie at residues 1-23, 206-225, and 240-264; these read MMTI…NIYT, TPFS…SPLN, and SSSS…LSSS. Positions 213-225 are enriched in low complexity; the sequence is PNSPNSTSSSPLN. HTH myb-type domains lie at 403–465 and 466–517; these read KKST…CPAI and RKGS…SREV. DNA-binding regions (H-T-H motif) lie at residues 437-461 and 489-513; these read WKKI…KRVL and WKNV…KSCM. Positions 518-570 constitute a Myb-like domain; the sequence is PWTPKEDEILQKKVIENKQDSTKEIGWMDLSKAMARARQTKIPRTALECKIRF.

The protein localises to the nucleus. This Dictyostelium discoideum (Social amoeba) protein is Myb-like protein N (mybN).